Here is a 335-residue protein sequence, read N- to C-terminus: Glyceraldehyde-3-phosphate dehydrogenase (335 aa).

NAD(+)-binding positions include 12–13 (RI), Asp-36, Arg-80, and Ser-122. Residues 152-154 (SCT), Thr-183, Arg-198, 211-212 (TG), and Arg-234 each bind D-glyceraldehyde 3-phosphate. Catalysis depends on Cys-153, which acts as the Nucleophile. Asn-316 is a binding site for NAD(+).

This sequence belongs to the glyceraldehyde-3-phosphate dehydrogenase family. Homotetramer.

Its subcellular location is the cytoplasm. The catalysed reaction is D-glyceraldehyde 3-phosphate + phosphate + NAD(+) = (2R)-3-phospho-glyceroyl phosphate + NADH + H(+). The protein operates within carbohydrate degradation; glycolysis; pyruvate from D-glyceraldehyde 3-phosphate: step 1/5. Functionally, catalyzes the oxidative phosphorylation of glyceraldehyde 3-phosphate (G3P) to 1,3-bisphosphoglycerate (BPG) using the cofactor NAD. The first reaction step involves the formation of a hemiacetal intermediate between G3P and a cysteine residue, and this hemiacetal intermediate is then oxidized to a thioester, with concomitant reduction of NAD to NADH. The reduced NADH is then exchanged with the second NAD, and the thioester is attacked by a nucleophilic inorganic phosphate to produce BPG. This Xanthobacter flavus protein is Glyceraldehyde-3-phosphate dehydrogenase (gap).